The sequence spans 228 residues: Ribonuclease 3 (228 aa).

The RNase III domain maps to 7-136 (LNKLKNEYNI…FNGALFLDQG (130 aa)). Glutamate 49 contributes to the Mg(2+) binding site. Aspartate 53 is a catalytic residue. Residues aspartate 122 and glutamate 125 each coordinate Mg(2+). Glutamate 125 is an active-site residue. The DRBM domain maps to 162–228 (DYKTDLQELL…AAKAALQKFE (67 aa)). The disordered stretch occupies residues 207–228 (GEGHNKKAAEQQAAKAALQKFE). Low complexity predominate over residues 216-228 (EQQAAKAALQKFE).

It belongs to the ribonuclease III family. In terms of assembly, homodimer. Mg(2+) serves as cofactor.

It localises to the cytoplasm. It catalyses the reaction Endonucleolytic cleavage to 5'-phosphomonoester.. Digests double-stranded RNA. Involved in the processing of primary rRNA transcript to yield the immediate precursors to the large and small rRNAs (23S and 16S). Processes some mRNAs, and tRNAs when they are encoded in the rRNA operon. Processes pre-crRNA and tracrRNA of type II CRISPR loci if present in the organism. In Lactobacillus acidophilus (strain ATCC 700396 / NCK56 / N2 / NCFM), this protein is Ribonuclease 3.